The chain runs to 132 residues: Ribosome-binding factor A (132 aa).

It belongs to the RbfA family. As to quaternary structure, monomer. Binds 30S ribosomal subunits, but not 50S ribosomal subunits or 70S ribosomes.

The protein localises to the cytoplasm. Functionally, one of several proteins that assist in the late maturation steps of the functional core of the 30S ribosomal subunit. Associates with free 30S ribosomal subunits (but not with 30S subunits that are part of 70S ribosomes or polysomes). Required for efficient processing of 16S rRNA. May interact with the 5'-terminal helix region of 16S rRNA. This chain is Ribosome-binding factor A, found in Burkholderia lata (strain ATCC 17760 / DSM 23089 / LMG 22485 / NCIMB 9086 / R18194 / 383).